Reading from the N-terminus, the 1791-residue chain is 1-phosphatidylinositol-3-phosphate 5-kinase FAB1B (1791 aa).

Residues 39–105 (DQSCRVCYEC…VCNYCFRQWE (67 aa)) form an FYVE-type zinc finger. Positions 45, 48, 61, 64, 69, 72, 97, and 100 each coordinate Zn(2+). Disordered stretches follow at residues 166-186 (HGVS…SRRS), 279-370 (EQFQ…DRTT), 770-790 (SDLS…NPIV), and 834-859 (QQNN…DHQS). Over residues 279-293 (EQFQKKSEHDGRDEC) the composition is skewed to basic and acidic residues. Positions 324 to 345 (PENEEDERESALFDEEDNEGDA) are enriched in acidic residues. Residues 838-850 (EKPKETQSQKEEF) show a composition bias toward basic and acidic residues. Positions 1077–1111 (EKGFRRRIGELEEVLQKEKAEFEENMQKILHREVN) form a coiled coil. Over residues 1151–1164 (NSDDTKREENEKPP) the composition is skewed to basic and acidic residues. The disordered stretch occupies residues 1151–1242 (NSDDTKREEN…DTSYPLENKV (92 aa)). Composition is skewed to polar residues over residues 1167-1188 (KSQT…SEVN) and 1196-1206 (TGDTGSLNNVQ). Residues 1433–1758 (SELNIPRPVD…RFRKAMTTYF (326 aa)) enclose the PIPK domain. A disordered region spans residues 1769-1791 (NVVANNSKSDQPEETSQAGTQAE). Residues 1771–1791 (VANNSKSDQPEETSQAGTQAE) show a composition bias toward polar residues.

In terms of assembly, component of the PI(3,5)P2 regulatory complex at least composed of ATG18, SAC/FIG4, FAB1 and VAC14. Mg(2+) is required as a cofactor. Requires Mn(2+) as cofactor. In terms of tissue distribution, ubiquitous with highest expression levels in the root hair zone, pollen, and stamens.

The protein resides in the endosome membrane. The catalysed reaction is a 1,2-diacyl-sn-glycero-3-phospho-(1D-myo-inositol-3-phosphate) + ATP = a 1,2-diacyl-sn-glycero-3-phospho-(1D-myo-inositol-3,5-bisphosphate) + ADP + H(+). The PI(3,5)P2 regulatory complex regulates both the synthesis and turnover of phosphatidylinositol 3,5-bisphosphate (PtdIns(3,5)P2). Catalyzes the phosphorylation of phosphatidylinositol 3-phosphate on the fifth hydroxyl of the myo-inositol ring, to form phosphatidylinositol 3,5-bisphosphate. Plays an important role in maintenance of endomembrane homeostasis including endocytosis, vacuole formation, and vacuolar acidification processes. Required for development of viable pollen. Might mediate recycling of auxin transporters. The sequence is that of 1-phosphatidylinositol-3-phosphate 5-kinase FAB1B (FAB1B) from Arabidopsis thaliana (Mouse-ear cress).